A 102-amino-acid chain; its full sequence is Small ribosomal subunit protein uS10 (102 aa).

It belongs to the universal ribosomal protein uS10 family. In terms of assembly, part of the 30S ribosomal subunit.

Functionally, involved in the binding of tRNA to the ribosomes. The protein is Small ribosomal subunit protein uS10 of Fervidobacterium nodosum (strain ATCC 35602 / DSM 5306 / Rt17-B1).